A 476-amino-acid polypeptide reads, in one-letter code: Ovarian-specific serine/threonine-protein kinase Lok (476 aa).

One can recognise an FHA domain in the interval Phe-69–Ile-129. Residues Tyr-174–Leu-441 enclose the Protein kinase domain. ATP contacts are provided by residues Leu-180–Val-188 and Lys-203. Catalysis depends on Asp-303, which acts as the Proton acceptor.

The protein belongs to the protein kinase superfamily. CAMK Ser/Thr protein kinase family. CDS1 subfamily. In stage 3 embryos, both isoforms are expressed in both somatic and pole cell nuclei. Expression in pole cell nuclei is sustained until stage 9 and weakly expressed after pole cell invagination into the abdominal cavity.

Its subcellular location is the nucleus speckle. The catalysed reaction is L-seryl-[protein] + ATP = O-phospho-L-seryl-[protein] + ADP + H(+). It catalyses the reaction L-threonyl-[protein] + ATP = O-phospho-L-threonyl-[protein] + ADP + H(+). May have a role in germline establishment. In Drosophila melanogaster (Fruit fly), this protein is Ovarian-specific serine/threonine-protein kinase Lok (lok).